Here is a 577-residue protein sequence, read N- to C-terminus: Aspartate--tRNA ligase (577 aa).

L-aspartate is bound at residue Glu-171. The tract at residues 195 to 198 (QLFK) is aspartate. Arg-217 lines the L-aspartate pocket. Residues 217–219 (RDE) and Gln-226 contribute to the ATP site. His-437 lines the L-aspartate pocket. Glu-472 is a binding site for ATP. Arg-479 lines the L-aspartate pocket. An ATP-binding site is contributed by 524 to 527 (GFDR).

This sequence belongs to the class-II aminoacyl-tRNA synthetase family. Type 1 subfamily. In terms of assembly, homodimer.

The protein localises to the cytoplasm. It carries out the reaction tRNA(Asp) + L-aspartate + ATP = L-aspartyl-tRNA(Asp) + AMP + diphosphate. Catalyzes the attachment of L-aspartate to tRNA(Asp) in a two-step reaction: L-aspartate is first activated by ATP to form Asp-AMP and then transferred to the acceptor end of tRNA(Asp). This chain is Aspartate--tRNA ligase, found in Deinococcus geothermalis (strain DSM 11300 / CIP 105573 / AG-3a).